Here is a 1025-residue protein sequence, read N- to C-terminus: Multidrug resistance protein MdtC (1025 aa).

The next 12 membrane-spanning stretches (helical) occupy residues 3–23 (FFAL…AITL), 333–353 (EVEQ…FLFL), 360–380 (IIPA…MYLC), 387–407 (LSLM…IVVL), 431–451 (VGFT…PLLL), 463–483 (FAVT…TLTP), 528–548 (LVGV…ISIP), 853–873 (VILI…LYES), 875–895 (VHPL…LLAL), 897–917 (LFNA…IGIV), 953–973 (PIMM…LSGG), and 984–1004 (ITIV…TPVV).

It belongs to the resistance-nodulation-cell division (RND) (TC 2.A.6) family. MdtC subfamily. In terms of assembly, part of a tripartite efflux system composed of MdtA, MdtB and MdtC. MdtC forms a heteromultimer with MdtB.

It localises to the cell inner membrane. This Shigella sonnei (strain Ss046) protein is Multidrug resistance protein MdtC.